Reading from the N-terminus, the 505-residue chain is Betaine aldehyde dehydrogenase (505 aa).

239–244 is an NAD(+) binding site; that stretch reads GSTATG. The active-site Proton acceptor is the Glu261. The active-site Nucleophile is Cys296. A Microbody targeting signal motif is present at residues 503-505; sequence SKL.

It belongs to the aldehyde dehydrogenase family. As to quaternary structure, homodimer.

It localises to the peroxisome. It catalyses the reaction betaine aldehyde + NAD(+) + H2O = glycine betaine + NADH + 2 H(+). It participates in amine and polyamine biosynthesis; betaine biosynthesis via choline pathway; betaine from betaine aldehyde: step 1/1. The protein is Betaine aldehyde dehydrogenase of Hordeum vulgare (Barley).